The chain runs to 304 residues: MYYGFDMGGTKIELGVFDENLQRIWHKRVPTPREDYPQLLQILRDLTEEADTYCGVQGSVGIGIPGLPNADDGTVFTANVPSAMGQPLQADLSRLIQREVRIDNDANCFALSEAWDPEFRTYPTVLGLILGTGVGGGLIVNGSIVSGRNHITGEFGHFRLPVDALDILGADIPHVPCGCGHRGCIENYISGRGFEWMYSHFYQHTLPATDIIAHYAAGEPKAVAHVERFMDVLAVCLGNLLTMLDPHLVVVGGGLSNFEKIYQELPKRLPAHLLRVARLPRIEKARYGDSGGVRGAAFLHLAEK.

ATP contacts are provided by residues 4 to 11 (GFDMGGTK) and 133 to 140 (GVGGGLIV). Zn(2+) contacts are provided by H157, C177, C179, and C184.

The protein belongs to the ROK (NagC/XylR) family. NagK subfamily.

It carries out the reaction N-acetyl-D-glucosamine + ATP = N-acetyl-D-glucosamine 6-phosphate + ADP + H(+). It participates in cell wall biogenesis; peptidoglycan recycling. In terms of biological role, catalyzes the phosphorylation of N-acetyl-D-glucosamine (GlcNAc) derived from cell-wall degradation, yielding GlcNAc-6-P. The sequence is that of N-acetyl-D-glucosamine kinase from Yersinia pseudotuberculosis serotype O:1b (strain IP 31758).